We begin with the raw amino-acid sequence, 58 residues long: MMSSSQIIVCNKINIFVCKYNLLQINFTLNQSVFVFVVRSSNLVFQPLGMVKMRRSNC.

Its function is as follows. Stimulates the expression of 39k gene most probably by increasing IE1 expression. The sequence is that of Transactivator protein ORF121 (AC121) from Lepidoptera (butterflies and moths).